A 307-amino-acid polypeptide reads, in one-letter code: Nicotinamide/nicotinic acid mononucleotide adenylyltransferase 2 (307 aa).

Residues S16 and F17 each contribute to the NAD(+) site. H24 provides a ligand contact to ATP. Positions 92 and 95 each coordinate NAD(+). Residues C164 and C165 are each lipidated (S-palmitoyl cysteine). NAD(+) is bound by residues G200, D202, L212, W213, and R232. 271-274 contributes to the ATP binding site; the sequence is TKSR.

Belongs to the eukaryotic NMN adenylyltransferase family. In terms of assembly, monomer. The cofactor is Mg(2+). In terms of processing, degraded in response to injured neurite. Degradation is caused by polyubiquitination by MYCBP2 after recognition by FBXO45. Post-translationally, palmitoylated; palmitoylation is required for membrane association. Expressed predominantly in the brain and nervous system.

It localises to the golgi apparatus membrane. The protein localises to the cytoplasmic vesicle membrane. Its subcellular location is the cytoplasm. It is found in the cell projection. The protein resides in the axon. It carries out the reaction beta-nicotinamide D-ribonucleotide + ATP + H(+) = diphosphate + NAD(+). The catalysed reaction is nicotinate beta-D-ribonucleotide + ATP + H(+) = deamido-NAD(+) + diphosphate. The protein operates within cofactor biosynthesis; NAD(+) biosynthesis; NAD(+) from nicotinamide D-ribonucleotide: step 1/1. Its pathway is cofactor biosynthesis; NAD(+) biosynthesis; deamido-NAD(+) from nicotinate D-ribonucleotide: step 1/1. Its activity is regulated as follows. Inhibited by P1-(adenosine-5')-P3-(nicotinamide-riboside-5')-triphosphate (Np3AD) and P1-(adenosine-5')-P4-(nicotinamide-riboside-5')-tetraphosphate (Np4AD). Its function is as follows. Nicotinamide/nicotinate-nucleotide adenylyltransferase that acts as an axon maintenance factor. Axon survival factor required for the maintenance of healthy axons: acts by delaying Wallerian axon degeneration, an evolutionarily conserved process that drives the loss of damaged axons. Catalyzes the formation of NAD(+) from nicotinamide mononucleotide (NMN) and ATP. Can also use the deamidated form; nicotinic acid mononucleotide (NaMN) as substrate but with a lower efficiency. Cannot use triazofurin monophosphate (TrMP) as substrate. Also catalyzes the reverse reaction, i.e. the pyrophosphorolytic cleavage of NAD(+). For the pyrophosphorolytic activity prefers NAD(+), NADH and NaAD as substrates and degrades nicotinic acid adenine dinucleotide phosphate (NHD) less effectively. Fails to cleave phosphorylated dinucleotides NADP(+), NADPH and NaADP(+). Also acts as an activator of ADP-ribosylation by supporting the catalytic activity of PARP16 and promoting mono-ADP-ribosylation of ribosomes by PARP16. May be involved in the maintenance of axonal integrity. The sequence is that of Nicotinamide/nicotinic acid mononucleotide adenylyltransferase 2 from Mus musculus (Mouse).